Reading from the N-terminus, the 320-residue chain is Mitochondrial fission regulator 1-like-B (320 aa).

Residues 1–37 (MASLGAAAEPERSLFGKDGAEACESPEGRRSGRRKRT) are disordered. Basic and acidic residues predominate over residues 9 to 30 (EPERSLFGKDGAEACESPEGRR).

It belongs to the MTFR1 family.

Its subcellular location is the mitochondrion outer membrane. Functionally, mitochondrial protein required for adaptation of miochondrial dynamics to metabolic changes. Regulates mitochondrial morphology at steady state and mediates AMPK-dependent stress-induced mitochondrial fragmentation via the control of OPA1 levels. The polypeptide is Mitochondrial fission regulator 1-like-B (mtfr1l-b) (Xenopus laevis (African clawed frog)).